Reading from the N-terminus, the 1026-residue chain is HEAT repeat-containing protein 4 (1026 aa).

Positions 135 to 175 (AVKTESSANPEKKLKKSKPASTVREAPRPLIHHPCMHPDML) are disordered. HEAT repeat units follow at residues 530–568 (LLPALEAALCDKNAHVRMAAAICQYAIQSHNPLARNIMQ), 724–760 (KLMTAKLLPSFLHCFSDDFTAVRRAACLAAGALQIRD), and 761–794 (KMVLECLLNLMQRDPYWKIKAFAIRALGQIGQVS).

This is HEAT repeat-containing protein 4 (HEATR4) from Homo sapiens (Human).